Reading from the N-terminus, the 456-residue chain is MDKRFAVVLAAGQGTRMKSKLYKVLHPVCGKPMVEHVVDEALKLSLSKLVTIVGHGAEEVKKQLGDKSEYRVQAKQLGTAHAVKQAQPFLADEKGVTIVICGDTPLLTAETMEQMLKEHTQREAKRTILTAVAEDPTGYGRIIRSENGAVQKIVEHKDASEEERLVTEINTGTYCFDNEALFRAIDQVSNDNAQGEYYLPDVIEILKNEGETVAAYQTGNFQETLGVNDRVALSQAEQFMKERINKRHMQNGVTLIDPMNTYISPDAVIGSDTVIYPGTVIKGEVQIGEDTIIGPHTEIMNSAIGSRTVIKQSVVNHSKVGNDVNIGPFAHIRPDSVIGNEVKIGNFVEIKKTQFGDRSKASHLSYVGDAEVGTDVNLGCGSITVNYDGKNKYLTKIEDGAFIGCNSNLVAPVTVGEGAYVAAGSTVTEDVPGKALAIARARQVNKDDYVKNIHKK.

Residues 1 to 230 (MDKRFAVVLA…FQETLGVNDR (230 aa)) are pyrophosphorylase. Residues 9–12 (LAAG), K23, Q73, and 78–79 (GT) each bind UDP-N-acetyl-alpha-D-glucosamine. Mg(2+) is bound at residue D103. UDP-N-acetyl-alpha-D-glucosamine contacts are provided by G140, E155, N170, and N228. N228 is a binding site for Mg(2+). The segment at 231–251 (VALSQAEQFMKERINKRHMQN) is linker. The N-acetyltransferase stretch occupies residues 252-456 (GVTLIDPMNT…DDYVKNIHKK (205 aa)). 2 residues coordinate UDP-N-acetyl-alpha-D-glucosamine: R333 and K351. The active-site Proton acceptor is H363. UDP-N-acetyl-alpha-D-glucosamine is bound by residues Y366 and N377. Acetyl-CoA-binding positions include 386-387 (NY), A423, and R440.

The protein in the N-terminal section; belongs to the N-acetylglucosamine-1-phosphate uridyltransferase family. It in the C-terminal section; belongs to the transferase hexapeptide repeat family. Homotrimer. It depends on Mg(2+) as a cofactor.

It is found in the cytoplasm. The catalysed reaction is alpha-D-glucosamine 1-phosphate + acetyl-CoA = N-acetyl-alpha-D-glucosamine 1-phosphate + CoA + H(+). It carries out the reaction N-acetyl-alpha-D-glucosamine 1-phosphate + UTP + H(+) = UDP-N-acetyl-alpha-D-glucosamine + diphosphate. It participates in nucleotide-sugar biosynthesis; UDP-N-acetyl-alpha-D-glucosamine biosynthesis; N-acetyl-alpha-D-glucosamine 1-phosphate from alpha-D-glucosamine 6-phosphate (route II): step 2/2. Its pathway is nucleotide-sugar biosynthesis; UDP-N-acetyl-alpha-D-glucosamine biosynthesis; UDP-N-acetyl-alpha-D-glucosamine from N-acetyl-alpha-D-glucosamine 1-phosphate: step 1/1. The protein operates within bacterial outer membrane biogenesis; LPS lipid A biosynthesis. Functionally, catalyzes the last two sequential reactions in the de novo biosynthetic pathway for UDP-N-acetylglucosamine (UDP-GlcNAc). The C-terminal domain catalyzes the transfer of acetyl group from acetyl coenzyme A to glucosamine-1-phosphate (GlcN-1-P) to produce N-acetylglucosamine-1-phosphate (GlcNAc-1-P), which is converted into UDP-GlcNAc by the transfer of uridine 5-monophosphate (from uridine 5-triphosphate), a reaction catalyzed by the N-terminal domain. This chain is Bifunctional protein GlmU, found in Bacillus subtilis (strain 168).